Reading from the N-terminus, the 262-residue chain is MKFLALALTILLAAATQAVPMQADAPSQLEHVKVAMMEYMAQVKETGQRSIDLLDDTEFKEYKVQLSQSLDNLQQYAQTTSQSLAPYSEAFGAQLTDAAAAVRAEVMKDVEDVRTQLEPKRAELKEVLDKHIDEYRKKLEPLIKEIVEQRRTELEAFRVKMEPVVEEMRAKVSTNVEETKAKLMPIVETVRAKLTERLEELRTLAAPYAEEYKEQMFKAVGEVREKVGPLTNDFKGQVGPAAEQAKEKLMDFYETISQAMKA.

Residues 1 to 18 (MKFLALALTILLAAATQA) form the signal peptide. The segment at 32–63 (VKVAMMEYMAQVKETGQRSIDLLDDTEFKEYK) is 3 X approximate tandem repeats. 2 repeat units span residues 64 to 85 (VQLS…QSLA) and 87 to 107 (YSEA…AEVM). Residues 64 to 262 (VQLSQSLDNL…YETISQAMKA (199 aa)) form a 10 X approximate tandem repeats region. A 3; half-length repeat occupies 108 to 118 (KDVEDVRTQLE). 5 repeat units span residues 119 to 140 (PKRA…KKLE), 141 to 162 (PLIK…VKME), 163 to 184 (PVVE…AKLM), 185 to 206 (PIVE…TLAA), and 207 to 228 (PYAE…EKVG). The stretch at 229 to 239 (PLTNDFKGQVG) is one 9; half-length repeat. Repeat 10 spans residues 240–262 (PAAEQAKEKLMDFYETISQAMKA).

This sequence belongs to the apolipoprotein A1/A4/E family.

The protein localises to the secreted. Its function is as follows. Participates in the reverse transport of cholesterol from tissues to the liver for excretion by promoting cholesterol efflux from tissues and by acting as a cofactor for the lecithin cholesterol acyltransferase (LCAT). The protein is Apolipoprotein A-I (apoa1) of Salmo trutta (Brown trout).